The following is a 100-amino-acid chain: uncharacterized protein (100 aa).

This is an uncharacterized protein from Caenorhabditis elegans.